We begin with the raw amino-acid sequence, 434 residues long: 3-phosphoshikimate 1-carboxyvinyltransferase (434 aa).

3-phosphoshikimate contacts are provided by Lys-15, Ser-16, and Arg-20. Lys-15 is a binding site for phosphoenolpyruvate. Phosphoenolpyruvate is bound by residues Gly-96 and Arg-124. 5 residues coordinate 3-phosphoshikimate: Ser-169, Gln-171, Ser-195, Asp-319, and Lys-346. A phosphoenolpyruvate-binding site is contributed by Gln-171. Residue Asp-319 is the Proton acceptor of the active site. Positions 350 and 394 each coordinate phosphoenolpyruvate.

Belongs to the EPSP synthase family. In terms of assembly, monomer.

The protein localises to the cytoplasm. The enzyme catalyses 3-phosphoshikimate + phosphoenolpyruvate = 5-O-(1-carboxyvinyl)-3-phosphoshikimate + phosphate. It functions in the pathway metabolic intermediate biosynthesis; chorismate biosynthesis; chorismate from D-erythrose 4-phosphate and phosphoenolpyruvate: step 6/7. Functionally, catalyzes the transfer of the enolpyruvyl moiety of phosphoenolpyruvate (PEP) to the 5-hydroxyl of shikimate-3-phosphate (S3P) to produce enolpyruvyl shikimate-3-phosphate and inorganic phosphate. This Chlorobium phaeobacteroides (strain DSM 266 / SMG 266 / 2430) protein is 3-phosphoshikimate 1-carboxyvinyltransferase.